Here is a 469-residue protein sequence, read N- to C-terminus: Cysteine--tRNA ligase (469 aa).

Cys-28 is a Zn(2+) binding site. Positions 30–40 match the 'HIGH' region motif; the sequence is PTVYNYIHIGN. Residues Cys-213, His-238, and Glu-242 each coordinate Zn(2+). The 'KMSKS' region motif lies at 270–274; it reads KMSKS. Lys-273 contributes to the ATP binding site.

The protein belongs to the class-I aminoacyl-tRNA synthetase family. As to quaternary structure, monomer. The cofactor is Zn(2+).

It localises to the cytoplasm. The catalysed reaction is tRNA(Cys) + L-cysteine + ATP = L-cysteinyl-tRNA(Cys) + AMP + diphosphate. This Leuconostoc citreum (strain KM20) protein is Cysteine--tRNA ligase.